A 208-amino-acid polypeptide reads, in one-letter code: V-type ATP synthase subunit E (208 aa).

It belongs to the V-ATPase E subunit family.

Its function is as follows. Produces ATP from ADP in the presence of a proton gradient across the membrane. The chain is V-type ATP synthase subunit E from Chlamydia trachomatis serovar A (strain ATCC VR-571B / DSM 19440 / HAR-13).